The chain runs to 1265 residues: Protein transport protein SEC31 (1265 aa).

WD repeat units follow at residues 6 to 46 (EIAR…ELWD), 61 to 105 (TVDN…KTKD), 116 to 156 (KHTG…EPFA), 162 to 202 (TPMD…EVLH), 209 to 252 (GGRA…APEK), 256 to 296 (GHKK…KLGE), and 299 to 339 (TTAN…PSVS). A WD 8; interaction with SEC13 repeat occupies 380–403 (SFGFGSKLVIINTDSSGKSTVKVD). Basic and acidic residues predominate over residues 457 to 480 (KESLFEDANNDEKEATSPETKKEN). 3 disordered regions span residues 457–485 (KESLFEDANNDEKEATSPETKKENGEDDF), 765–784 (VKSSANAKIAKPASSSGQTR), and 793–1163 (PAYA…IPEN). The span at 794–810 (AYAPPVQAPPVQAPQPP) shows a compositional bias: pro residues. Low complexity-rich tracts occupy residues 811-824 (LVQQQQQQQQQQQP), 865-875 (TPSSLSGTTSG), 901-931 (AKTAAPRRAAAAATPPVSTPTPVSAPAFGSP), 939-951 (SQPGSVGSVSSAG), and 969-987 (SISRSTSRTTVPTSSTVPA). Polar residues predominate over residues 1004–1023 (SDASQPPSSGFASPTLNSSP). Composition is skewed to pro residues over residues 1062 to 1071 (YAPPKNPYAV) and 1083 to 1101 (APPPPAPKLGSAAPPPPQP).

Belongs to the WD repeat SEC31 family. The COPII coat is composed of at least 5 proteins: the SEC23/24 complex, the SEC13/31 complex, and the protein SAR1. SEC13 and SEC31 make a 2:2 tetramer that forms the edge element of the COPII outer coat. The tetramer self-assembles in multiple copies to form the complete polyhedral cage. Interacts (via WD 8) with SEC13.

It is found in the cytoplasmic vesicle. The protein localises to the COPII-coated vesicle membrane. The protein resides in the endoplasmic reticulum membrane. In terms of biological role, component of the coat protein complex II (COPII) which promotes the formation of transport vesicles from the endoplasmic reticulum (ER). The coat has two main functions, the physical deformation of the endoplasmic reticulum membrane into vesicles and the selection of cargo molecules. The polypeptide is Protein transport protein SEC31 (PGA63) (Candida albicans (strain SC5314 / ATCC MYA-2876) (Yeast)).